Here is a 127-residue protein sequence, read N- to C-terminus: Small ribosomal subunit protein uS11 (127 aa).

The protein belongs to the universal ribosomal protein uS11 family. In terms of assembly, part of the 30S ribosomal subunit. Interacts with proteins S7 and S18. Binds to IF-3.

Its function is as follows. Located on the platform of the 30S subunit, it bridges several disparate RNA helices of the 16S rRNA. Forms part of the Shine-Dalgarno cleft in the 70S ribosome. The polypeptide is Small ribosomal subunit protein uS11 (Streptococcus pyogenes serotype M49 (strain NZ131)).